Here is a 226-residue protein sequence, read N- to C-terminus: UPF0758 protein SPs0978 (226 aa).

Positions S103 to L225 constitute an MPN domain. The Zn(2+) site is built by H174, H176, and D187. Residues H174–D187 carry the JAMM motif motif.

Belongs to the UPF0758 family.

In Streptococcus pyogenes serotype M3 (strain SSI-1), this protein is UPF0758 protein SPs0978.